The primary structure comprises 600 residues: Terpenoid synthase 8 (600 aa).

Residues aspartate 352, aspartate 356, asparagine 497, and aspartate 505 each coordinate Mg(2+). Residues 352-356 (DDTCD) carry the DDXXD motif motif.

Belongs to the terpene synthase family. Tpsa subfamily. The cofactor is Mg(2+). It depends on Mn(2+) as a cofactor. In terms of tissue distribution, stele, and tips of primary and secondary root.

The protein resides in the plastid. It carries out the reaction (2E,6E,10E)-geranylgeranyl diphosphate = rhizathalene A + diphosphate. Its pathway is secondary metabolite biosynthesis; terpenoid biosynthesis. In terms of biological role, catalyzes the synthesis of the semivolatile diterpene rhizatalene A. The protein is Terpenoid synthase 8 (TPS08) of Arabidopsis thaliana (Mouse-ear cress).